The primary structure comprises 412 residues: Branched-chain alpha-ketoacid dehydrogenase kinase (412 aa).

The N-terminal 30 residues, 1–30 (MILASVLRSGPGGGLPLRPLLGPALALRAR), are a transit peptide targeting the mitochondrion. Phosphoserine is present on S31. S52 is subject to Phosphoserine; by autocatalysis. Residues 159–404 (LDDHKDVVTL…DVYLRLRHID (246 aa)) enclose the Histidine kinase domain. 2 positions are modified to N6-acetyllysine: K192 and K233. Positions 279 and 315 each coordinate ATP. Residue N279 coordinates Mg(2+). Positions 328, 330, and 333 each coordinate K(+). Positions 334 and 335 each coordinate ATP. Phosphoserine is present on residues S356 and S360. ATP-binding residues include H364, G367, and L370. G367 is a binding site for K(+).

It belongs to the PDK/BCKDK protein kinase family. Homodimer. Homotetramer. Dimerizes through interaction of two opposing nucleotide-binding domains. Interacts with E2 component of the branched-chain alpha-ketoacid dehydrogenase (BCKDH) complex. Competes with BCKDK for binding to the E2 component; this interaction is modulated by branched-chain alpha-keto acids. At steady state, BCKDH holoenzyme contains BCKDK and BCKDHA is phosphorylated. In response to high levels of branched-chain alpha-keto acids, the inhibitory BCKDK is replaced by activating PPM1K leading to BCKDHA dephosphorylation and BCAA degradation. In terms of processing, autophosphorylated. As to expression, ubiquitous.

Its subcellular location is the mitochondrion matrix. It carries out the reaction L-seryl-[3-methyl-2-oxobutanoate dehydrogenase] + ATP = O-phospho-L-seryl-[3-methyl-2-oxobutanoate dehydrogenase] + ADP + H(+). It catalyses the reaction L-seryl-[protein] + ATP = O-phospho-L-seryl-[protein] + ADP + H(+). It functions in the pathway protein modification. With respect to regulation, allosterically inhibited by certain thiazoles and thiophenes: thiazoles increase interaction with DBT/BCKDH-E2, whereas thiophenes reduce this interaction. Inhibited by 3,6- dichlorobenzo[b]thiophene-2-carboxylic acid (BT2). The ATP binding is mediated by both potassium and magnesium ions. Serine/threonine-protein kinase component of macronutrients metabolism. Forms a functional kinase and phosphatase pair with PPM1K, serving as a metabolic regulatory node that coordinates branched-chain amino acids (BCAAs) with glucose and lipid metabolism via two distinct phosphoprotein targets: mitochondrial BCKDHA subunit of the branched-chain alpha-ketoacid dehydrogenase (BCKDH) complex and cytosolic ACLY, a lipogenic enzyme of Krebs cycle. Phosphorylates and inactivates mitochondrial BCKDH complex a multisubunit complex consisting of three multimeric components each involved in different steps of BCAA catabolism: E1 composed of BCKDHA and BCKDHB, E2 core composed of DBT monomers, and E3 composed of DLD monomers. Associates with the E2 component of BCKDH complex and phosphorylates BCKDHA on Ser-337, leading to conformational changes that interrupt substrate channeling between E1 and E2 and inactivates the BCKDH complex. Phosphorylates ACLY on Ser-455 in response to changes in cellular carbohydrate abundance such as occurs during fasting to feeding metabolic transition. Refeeding stimulates MLXIPL/ChREBP transcription factor, leading to increased BCKDK to PPM1K expression ratio, phosphorylation and activation of ACLY that ultimately results in the generation of malonyl-CoA and oxaloacetate immediate substrates of de novo lipogenesis and glucogenesis, respectively. Recognizes phosphosites having SxxE/D canonical motif. The chain is Branched-chain alpha-ketoacid dehydrogenase kinase from Homo sapiens (Human).